We begin with the raw amino-acid sequence, 411 residues long: GTPase Obg (411 aa).

The region spanning 1–157 (MQFIDEARFV…REIRLELRVL (157 aa)) is the Obg domain. Residues 20–45 (AVSFHREKYRPRGGPDGGRGGDGGSV) are disordered. Gly residues predominate over residues 33–43 (GPDGGRGGDGG). The region spanning 158–330 (SDVGLVGLPN…LERSAEAAPR (173 aa)) is the OBG-type G domain. GTP-binding positions include 164 to 171 (GLPNAGKS), 189 to 193 (FTTLT), 212 to 215 (DIPG), 276 to 279 (NKVD), and 311 to 313 (ARL). Residues Ser171 and Thr191 each coordinate Mg(2+). Residues 335–411 (VFRPSWRGLR…RIGDVSFEFR (77 aa)) enclose the OCT domain.

Belongs to the TRAFAC class OBG-HflX-like GTPase superfamily. OBG GTPase family. Monomer. The cofactor is Mg(2+).

The protein localises to the cytoplasm. Functionally, an essential GTPase which binds GTP, GDP and possibly (p)ppGpp with moderate affinity, with high nucleotide exchange rates and a fairly low GTP hydrolysis rate. Plays a role in control of the cell cycle, stress response, ribosome biogenesis and in those bacteria that undergo differentiation, in morphogenesis control. The polypeptide is GTPase Obg (Rubrobacter xylanophilus (strain DSM 9941 / JCM 11954 / NBRC 16129 / PRD-1)).